The primary structure comprises 2628 residues: Hemagglutinin A (2628 aa).

The signal sequence occupies residues 1–24 (MRKLNSLFSLAVLLSLLCWGQTAA). 5 peptidase C25-like regions span residues 25–539 (AQGG…TPPP), 540–995 (GGTS…TPPP), 996–1451 (GGTS…TPPP), 1452–1907 (GGTS…TPPP), and 2074–2628 (IDAD…LAVK). 7 disordered regions span residues 493 to 512 (WDAPNGTPNPNPGTTTLSES), 520 to 546 (SWKTIDADGDGNNWTTTPPPGGTSFAG), 944 to 1002 (KWDA…SFAG), 1400 to 1458 (KWDA…SFAG), 1856 to 1881 (KWDAPNGTPNPNPNPNPGTTTLSESF), 1890 to 1909 (KTIDADGDGNNWTTTPPPGG), and 2336 to 2358 (SSWKTIDADGDGNNWTTTPPPGG). Residues 496–508 (PNGTPNPNPGTTT) are compositionally biased toward low complexity.

The protein belongs to the peptidase C25 family.

Functionally, agglutinates erythrocytes. The polypeptide is Hemagglutinin A (hagA) (Porphyromonas gingivalis (Bacteroides gingivalis)).